Here is a 283-residue protein sequence, read N- to C-terminus: 4-diphosphocytidyl-2-C-methyl-D-erythritol kinase (283 aa).

Residue Lys12 is part of the active site. ATP is bound at residue 99 to 109; it reads PLAAGIGGGSA. Residue Asp141 is part of the active site.

Belongs to the GHMP kinase family. IspE subfamily.

The catalysed reaction is 4-CDP-2-C-methyl-D-erythritol + ATP = 4-CDP-2-C-methyl-D-erythritol 2-phosphate + ADP + H(+). It functions in the pathway isoprenoid biosynthesis; isopentenyl diphosphate biosynthesis via DXP pathway; isopentenyl diphosphate from 1-deoxy-D-xylulose 5-phosphate: step 3/6. Catalyzes the phosphorylation of the position 2 hydroxy group of 4-diphosphocytidyl-2C-methyl-D-erythritol. The protein is 4-diphosphocytidyl-2-C-methyl-D-erythritol kinase of Sphingopyxis alaskensis (strain DSM 13593 / LMG 18877 / RB2256) (Sphingomonas alaskensis).